Consider the following 316-residue polypeptide: tRNA dimethylallyltransferase (316 aa).

Residue 19–26 participates in ATP binding; it reads GPTASGKT. 21–26 is a substrate binding site; it reads TASGKT. Interaction with substrate tRNA stretches follow at residues 44–47, 168–172, and 249–254; these read DSAL, QRITR, and RCVGYR.

It belongs to the IPP transferase family. Monomer. The cofactor is Mg(2+).

It catalyses the reaction adenosine(37) in tRNA + dimethylallyl diphosphate = N(6)-dimethylallyladenosine(37) in tRNA + diphosphate. Catalyzes the transfer of a dimethylallyl group onto the adenine at position 37 in tRNAs that read codons beginning with uridine, leading to the formation of N6-(dimethylallyl)adenosine (i(6)A). This is tRNA dimethylallyltransferase from Colwellia psychrerythraea (strain 34H / ATCC BAA-681) (Vibrio psychroerythus).